The primary structure comprises 149 residues: UPF0178 protein SERP0336 (149 aa).

It belongs to the UPF0178 family.

The sequence is that of UPF0178 protein SERP0336 from Staphylococcus epidermidis (strain ATCC 35984 / DSM 28319 / BCRC 17069 / CCUG 31568 / BM 3577 / RP62A).